Here is a 1812-residue protein sequence, read N- to C-terminus: Protein virilizer homolog (1812 aa).

Residue alanine 2 is modified to N-acetylalanine. Disordered regions lie at residues 132–302 (ISHD…EQIS) and 576–596 (KTSS…GLER). Phosphoserine occurs at positions 133 and 138. The span at 139-152 (PPPPPPPPPPPQPQ) shows a compositional bias: pro residues. Positions 160–169 (KHADGEKEDQ) are enriched in basic and acidic residues. Serine 173 is modified (phosphoserine). Pro residues predominate over residues 174–190 (PPRPQPRGPRTPPGPPP). Threonine 184 carries the phosphothreonine modification. A Phosphoserine modification is found at serine 222. A compositionally biased stretch (polar residues) spans 224–233 (DRNSVPQEGQ). Acidic residues-rich tracts occupy residues 234–266 (YSDE…EDED) and 274–302 (IPEE…EQIS). The span at 584–596 (SEPDHDTDAGLER) shows a compositional bias: basic and acidic residues. A Phosphotyrosine modification is found at tyrosine 914. Serine 1579 bears the Phosphoserine mark. Disordered stretches follow at residues 1616-1635 (HVVP…GIRP) and 1663-1812 (KEVV…SFTR). A compositionally biased stretch (gly residues) spans 1689–1698 (GFSGNRGGRG). Threonine 1708 bears the Phosphothreonine mark. Position 1723 is an omega-N-methylarginine (arginine 1723). Polar residues predominate over residues 1723–1748 (RGSSWSAQNTPRGNYNESRGGQSNFN). Asymmetric dimethylarginine; alternate is present on arginine 1741. Position 1741 is an omega-N-methylarginine; alternate (arginine 1741). Residues arginine 1773, arginine 1775, and arginine 1793 each carry the asymmetric dimethylarginine modification. Residues 1788–1802 (GSGGSRGKFVSGGSG) show a composition bias toward gly residues. Residues 1803-1812 (RGRHVRSFTR) show a composition bias toward basic residues.

This sequence belongs to the vir family. Component of the WMM complex, a N6-methyltransferase complex composed of a catalytic subcomplex, named MAC, and of an associated subcomplex, named MACOM. The MAC subcomplex is composed of METTL3 and METTL14. The MACOM subcomplex is composed of WTAP, ZC3H13, CBLL1/HAKAI, VIRMA, and, in some cases of RBM15 (RBM15 or RBM15B). Interacts with WTAP. Also a component of a MACOM-like complex, named WTAP complex, composed of WTAP, ZC3H13, CBLL1, VIRMA, RBM15, BCLAF1 and THRAP3. Interacts with NUDT21 and CPSF6.

The protein resides in the nucleus speckle. Its subcellular location is the nucleus. The protein localises to the nucleoplasm. It is found in the cytoplasm. Associated component of the WMM complex, a complex that mediates N6-methyladenosine (m6A) methylation of RNAs, a modification that plays a role in the efficiency of mRNA splicing and RNA processing. Acts as a key regulator of m6A methylation by promoting m6A methylation of mRNAs in the 3'-UTR near the stop codon: recruits the catalytic core components METTL3 and METTL14, thereby guiding m6A methylation at specific sites. Required for mRNA polyadenylation via its role in selective m6A methylation: m6A methylation of mRNAs in the 3'-UTR near the stop codon correlating with alternative polyadenylation (APA). The protein is Protein virilizer homolog of Homo sapiens (Human).